The sequence spans 650 residues: Fructose-1,6-bisphosphatase class 3 (650 aa).

It belongs to the FBPase class 3 family. Mn(2+) serves as cofactor.

The catalysed reaction is beta-D-fructose 1,6-bisphosphate + H2O = beta-D-fructose 6-phosphate + phosphate. It functions in the pathway carbohydrate biosynthesis; gluconeogenesis. The sequence is that of Fructose-1,6-bisphosphatase class 3 from Staphylococcus xylosus.